The sequence spans 829 residues: Pre-mRNA-splicing factor syf1 (829 aa).

12 HAT repeats span residues 15-47, 49-81, 93-125, 127-161, 163-182, 277-312, 380-418, 420-456, 473-505, 544-578, 581-615, and 689-723; these read SLVS…YKLQ, GTVQ…FRTK, SEYQ…FLMQ, PLVT…FANS, EGET…PEDA, GSFE…FEES, DNKE…FYEA, GDLS…MELR, APKR…YVDL, KYFE…KAVD, ISIE…LEEE, and GEID…FEVQ. Positions 799–829 are disordered; sequence AASEGPKGGSMPVQPVEVHNPDAIDLDEMDE.

This sequence belongs to the crooked-neck family. In terms of assembly, associated with the spliceosome.

It is found in the nucleus. Involved in pre-mRNA splicing and cell cycle progression. The chain is Pre-mRNA-splicing factor syf1 (msp-41) from Neurospora crassa (strain ATCC 24698 / 74-OR23-1A / CBS 708.71 / DSM 1257 / FGSC 987).